The chain runs to 119 residues: Ribosome-binding factor A (119 aa).

Belongs to the RbfA family. In terms of assembly, monomer. Binds 30S ribosomal subunits, but not 50S ribosomal subunits or 70S ribosomes.

It is found in the cytoplasm. Its function is as follows. One of several proteins that assist in the late maturation steps of the functional core of the 30S ribosomal subunit. Associates with free 30S ribosomal subunits (but not with 30S subunits that are part of 70S ribosomes or polysomes). Required for efficient processing of 16S rRNA. May interact with the 5'-terminal helix region of 16S rRNA. This is Ribosome-binding factor A from Chlorobium phaeovibrioides (strain DSM 265 / 1930) (Prosthecochloris vibrioformis (strain DSM 265)).